The sequence spans 305 residues: Probable GTP 3',8-cyclase (305 aa).

In terms of domain architecture, Radical SAM core spans 6–233 (RHGRPVMSLR…MQDRKKYYID (228 aa)). Position 15 (arginine 15) interacts with GTP. The [4Fe-4S] cluster site is built by cysteine 22 and cysteine 26. Tyrosine 28 is a binding site for S-adenosyl-L-methionine. Cysteine 29 is a [4Fe-4S] cluster binding site. Arginine 62 contacts GTP. Residue glycine 66 coordinates S-adenosyl-L-methionine. Residue threonine 92 participates in GTP binding. Serine 116 is an S-adenosyl-L-methionine binding site. GTP is bound at residue lysine 153. [4Fe-4S] cluster contacts are provided by cysteine 249 and cysteine 252. Position 254–256 (254–256 (RLR)) interacts with GTP. A [4Fe-4S] cluster-binding site is contributed by cysteine 266.

This sequence belongs to the radical SAM superfamily. MoaA family. [4Fe-4S] cluster serves as cofactor.

It carries out the reaction GTP + AH2 + S-adenosyl-L-methionine = (8S)-3',8-cyclo-7,8-dihydroguanosine 5'-triphosphate + 5'-deoxyadenosine + L-methionine + A + H(+). It functions in the pathway cofactor biosynthesis; molybdopterin biosynthesis. Catalyzes the cyclization of GTP to (8S)-3',8-cyclo-7,8-dihydroguanosine 5'-triphosphate. The sequence is that of Probable GTP 3',8-cyclase from Methanothermobacter thermautotrophicus (strain ATCC 29096 / DSM 1053 / JCM 10044 / NBRC 100330 / Delta H) (Methanobacterium thermoautotrophicum).